We begin with the raw amino-acid sequence, 176 residues long: Urease accessory protein UreE (176 aa).

Residues 134 to 176 form a disordered region; that stretch reads FTPEGGAYGHGRTHAHEHGHTNHHGQHHDHADHGHSHDHSHDQ. Positions 161 to 176 are enriched in basic and acidic residues; the sequence is HDHADHGHSHDHSHDQ.

The protein belongs to the UreE family.

It localises to the cytoplasm. Functionally, involved in urease metallocenter assembly. Binds nickel. Probably functions as a nickel donor during metallocenter assembly. The polypeptide is Urease accessory protein UreE (Ruegeria sp. (strain TM1040) (Silicibacter sp.)).